Here is a 208-residue protein sequence, read N- to C-terminus: FMN-dependent NADH:quinone oxidoreductase 4 (208 aa).

The protein belongs to the azoreductase type 1 family. In terms of assembly, homodimer. FMN serves as cofactor.

The enzyme catalyses 2 a quinone + NADH + H(+) = 2 a 1,4-benzosemiquinone + NAD(+). It catalyses the reaction N,N-dimethyl-1,4-phenylenediamine + anthranilate + 2 NAD(+) = 2-(4-dimethylaminophenyl)diazenylbenzoate + 2 NADH + 2 H(+). Its function is as follows. Quinone reductase that provides resistance to thiol-specific stress caused by electrophilic quinones. Also exhibits azoreductase activity. Catalyzes the reductive cleavage of the azo bond in aromatic azo compounds to the corresponding amines. The sequence is that of FMN-dependent NADH:quinone oxidoreductase 4 from Bacillus cereus (strain ZK / E33L).